Here is a 448-residue protein sequence, read N- to C-terminus: tRNA modification GTPase MnmE (448 aa).

The (6S)-5-formyl-5,6,7,8-tetrahydrofolate site is built by R24, E81, and K120. The TrmE-type G domain maps to 216-373 (GLNVVLVGAP…LKRTLLREAG (158 aa)). N226 is a binding site for K(+). GTP is bound by residues 226–231 (NVGKSS), 245–251 (TDIAGTT), and 270–273 (DTAG). S230 is a binding site for Mg(2+). K(+) is bound by residues T245, I247, and T250. T251 serves as a coordination point for Mg(2+). (6S)-5-formyl-5,6,7,8-tetrahydrofolate is bound at residue K448.

The protein belongs to the TRAFAC class TrmE-Era-EngA-EngB-Septin-like GTPase superfamily. TrmE GTPase family. Homodimer. Heterotetramer of two MnmE and two MnmG subunits. The cofactor is K(+).

It localises to the cytoplasm. Exhibits a very high intrinsic GTPase hydrolysis rate. Involved in the addition of a carboxymethylaminomethyl (cmnm) group at the wobble position (U34) of certain tRNAs, forming tRNA-cmnm(5)s(2)U34. This is tRNA modification GTPase MnmE from Neisseria meningitidis serogroup C / serotype 2a (strain ATCC 700532 / DSM 15464 / FAM18).